The sequence spans 675 residues: DNA ligase (675 aa).

NAD(+) contacts are provided by residues 33-37 (DAEYD), 82-83 (SL), and E115. The N6-AMP-lysine intermediate role is filled by K117. NAD(+)-binding residues include R138, E175, K293, and K317. C411, C414, C429, and C435 together coordinate Zn(2+). Residues 594–675 (IADNPLKDKT…LIGYFTTIVS (82 aa)) enclose the BRCT domain.

The protein belongs to the NAD-dependent DNA ligase family. LigA subfamily. Mg(2+) is required as a cofactor. Mn(2+) serves as cofactor.

It catalyses the reaction NAD(+) + (deoxyribonucleotide)n-3'-hydroxyl + 5'-phospho-(deoxyribonucleotide)m = (deoxyribonucleotide)n+m + AMP + beta-nicotinamide D-nucleotide.. Its function is as follows. DNA ligase that catalyzes the formation of phosphodiester linkages between 5'-phosphoryl and 3'-hydroxyl groups in double-stranded DNA using NAD as a coenzyme and as the energy source for the reaction. It is essential for DNA replication and repair of damaged DNA. The chain is DNA ligase from Glaesserella parasuis serovar 5 (strain SH0165) (Haemophilus parasuis).